The chain runs to 177 residues: Translation initiation factor IF-3 (177 aa).

The protein belongs to the IF-3 family. As to quaternary structure, monomer.

The protein localises to the cytoplasm. Its function is as follows. IF-3 binds to the 30S ribosomal subunit and shifts the equilibrium between 70S ribosomes and their 50S and 30S subunits in favor of the free subunits, thus enhancing the availability of 30S subunits on which protein synthesis initiation begins. In Acaryochloris marina (strain MBIC 11017), this protein is Translation initiation factor IF-3.